We begin with the raw amino-acid sequence, 207 residues long: Transcription antitermination protein NusB (207 aa).

This sequence belongs to the NusB family.

Its function is as follows. Involved in transcription antitermination. Required for transcription of ribosomal RNA (rRNA) genes. Binds specifically to the boxA antiterminator sequence of the ribosomal RNA (rrn) operons. The protein is Transcription antitermination protein NusB of Trichodesmium erythraeum (strain IMS101).